The chain runs to 143 residues: MSPSESAKKNEKISEEATVESKAFSISVEKQTPDLDGLIVEELCMGNPNGKKAEPGKRVSVHYTGKLQGNGKIFDSTVGKSRYKFRLDAGKVIKGLDVGLNGMLVGGKRKLTIPPEMGYGAEGAGSIPPDSWLVFDVELLNVK.

The PPIase FKBP-type domain maps to 56–143 (GKRVSVHYTG…VFDVELLNVK (88 aa)).

It belongs to the FKBP-type PPIase family.

It carries out the reaction [protein]-peptidylproline (omega=180) = [protein]-peptidylproline (omega=0). Functionally, PPIases accelerate the folding of proteins. It catalyzes the cis-trans isomerization of proline imidic peptide bonds in oligopeptides. This chain is Peptidyl-prolyl cis-trans isomerase FKBP15-3 (FKBP15-3), found in Arabidopsis thaliana (Mouse-ear cress).